A 612-amino-acid chain; its full sequence is MEFSKETRRLALQKMQERDLDLLIIGGGITGAGVALQAAASGLDTGLIEMQDFAEGTSSRSTKLVHGGLRYLKQFDVEVVSDTVSERAVVQQIAPHIPKPDPMLLPVYDEPGSTFSMFRLKVAMDLYDLLAGVSNTPAANKVLTKEEVLKREPDLKQEGLLGGGVYLDFRNNDARLVIENIKRANRDGALIASHVKAEDFLLDDKRQIIGVKARDLLTDQEIIIKAKLVINTTGPWSDEIRQFSHKGQPIHQMRPTKGVHLVVDRQKLPVSQPVYVDTGLNDGRMVFVLPREEKTYFGTTDTDYTGDLQHPQVTQEDVDYLLGIVNNRFPNANLTINDIESSWAGLRPLLSGNSASDYNGGNSGKLSDDSFDHLIDTVKAYINHEDSREAVEKAIKQVETSTSEKELDPSAVSRGSSFERDENGLFTLAGGKITDYRKMAEGALKVIIQVLKEDFGKSFKLINSTTYPVSGGEINPANVDSELEAYAQLGTLSGLSMDDARYLANLYGSNAPKVFALTRQLKAAEGLSLAETLSLHYAMDYEMALKPTDYFLRRTNHLLFMRDSLDALIVPVIEEMAKHFDWSTDEKVKQEEELRRVIAENDLSALKGQQED.

FAD is bound at residue Asp21–Glu49. Basic and acidic residues predominate over residues Glu399–Asp408. Positions Glu399–Phe418 are disordered.

The protein belongs to the FAD-dependent glycerol-3-phosphate dehydrogenase family. The cofactor is FAD.

Its subcellular location is the cytoplasm. The enzyme catalyses sn-glycerol 3-phosphate + O2 = dihydroxyacetone phosphate + H2O2. The polypeptide is Alpha-glycerophosphate oxidase (glpO) (Streptococcus pyogenes serotype M6 (strain ATCC BAA-946 / MGAS10394)).